The sequence spans 191 residues: Photosystem I assembly protein Ycf4 (191 aa).

The next 2 helical transmembrane spans lie at L33–Y53 and L74–I94.

Belongs to the Ycf4 family.

It is found in the cellular thylakoid membrane. Functionally, seems to be required for the assembly of the photosystem I complex. In Prochlorococcus marinus (strain MIT 9303), this protein is Photosystem I assembly protein Ycf4.